Reading from the N-terminus, the 359-residue chain is sn-1 acyl-lipid omega-3 desaturase (ferredoxin) (359 aa).

2 consecutive transmembrane segments (helical) span residues 44-64 (LGYFFLDVGLIAGFYALAAYL) and 67-87 (WFFYPIFWLIQGTLFWSLFVV). A Histidine box-1 motif is present at residues 89–93 (HDCGH). A Histidine box-2 motif is present at residues 125–129 (HRTHH). 3 consecutive transmembrane segments (helical) span residues 153–173 (AWYEKLLRFYLPLIAYPIYLF), 206–226 (LAAFVGFLGFLTWQFGWLFLL), and 228–248 (FYVAPYLVFVVWLDLVTFLHH). The short motif at 291–295 (HHIFS) is the Histidine box-3 element.

This sequence belongs to the fatty acid desaturase type 2 family. It depends on Fe(2+) as a cofactor.

It localises to the membrane. The catalysed reaction is a 1-[(9Z,12Z)-octadecdienoyl]-2-acyl-glycerolipid + 2 reduced [2Fe-2S]-[ferredoxin] + O2 + 2 H(+) = a 1-[(9Z,12Z,15Z)-octadectrienoyl]-2-acyl-glycerolipid + 2 oxidized [2Fe-2S]-[ferredoxin] + 2 H2O. It catalyses the reaction a 1-[(6Z,9Z,12Z)-octadectrienoyl]-2-acyl-glycerolipid + 2 reduced [2Fe-2S]-[ferredoxin] + O2 + 2 H(+) = a 1-[(6Z,9Z,12Z,15Z)-octadectetraenoyl]-2-acyl-glycerolipid + 2 oxidized [2Fe-2S]-[ferredoxin] + 2 H2O. Its pathway is lipid metabolism; polyunsaturated fatty acid biosynthesis. Desaturase involved in fatty acid biosynthesis. Introduces a double bond at carbon 15 of linoleoyl and gamma-linolenoyl groups attached to the sn-1 position of the glycerol moiety of membrane glycerolipids. The polypeptide is sn-1 acyl-lipid omega-3 desaturase (ferredoxin) (Synechocystis sp. (strain ATCC 27184 / PCC 6803 / Kazusa)).